A 321-amino-acid chain; its full sequence is Sideroflexin-3 (321 aa).

Position 1 is an N-acetylmethionine (Met1). The next 4 membrane-spanning stretches (helical) occupy residues 146–164 (LGTA…ALGL), 174–194 (LVGR…NIPL), 226–246 (FQVV…PPLI), and 266–286 (LQVG…CALF).

Belongs to the sideroflexin family.

It localises to the mitochondrion membrane. It carries out the reaction L-serine(in) = L-serine(out). Mitochondrial serine transporter that mediates transport of serine into mitochondria, an important step of the one-carbon metabolism pathway. Mitochondrial serine is converted to glycine and formate, which then exits to the cytosol where it is used to generate the charged folates that serve as one-carbon donors. The sequence is that of Sideroflexin-3 from Homo sapiens (Human).